A 139-amino-acid chain; its full sequence is Large ribosomal subunit protein uL16 (139 aa).

Belongs to the universal ribosomal protein uL16 family. Part of the 50S ribosomal subunit.

Binds 23S rRNA and is also seen to make contacts with the A and possibly P site tRNAs. In Rippkaea orientalis (strain PCC 8801 / RF-1) (Cyanothece sp. (strain PCC 8801)), this protein is Large ribosomal subunit protein uL16.